A 523-amino-acid polypeptide reads, in one-letter code: MPSEYVPEATTVLVIGGGPAGSYASTLLAREGIDVVLLEAVKHPREHVGESMLPSMRHYLRFIDLESEYDARKFMHKPGAAFKFVHGQRECYTDFKILGPDRTTWNVFRAEADELMLRHAASQGVKIFEETRVESITFSESVDNSVSPESRPIAASWKNKSGQVGKISFNWLIDASGRQGIMSTKYMKNRIYREGLRNVAAYGYWKDVTVFEEGGPRSNAPWFECLTDREGWAWLIPLHNGTTSIGVVMHQDTSNRKKAEGPSGLEQHYLSQLKLAPGVQDLIGSKGSYVPGSVKSTADYSYHATEYSGDHYRIIGDAAAFVDPLFSSGVHVAMTGALSAASTILGSMKGQVTEVEAQAWHDAKIGICQTRFLLVVLSAYRQMQHVGNKALLDDVNASNFDAAFSLFRPIYQGEHDTSTSLTNEELSKMIEFTRNLFTPTTHQQYNEVKQRVGDLIALSGPVMPSDELDKVLDSDDSDAKAVLKRINSLKVLRNDTSPESFTSEAVNGYVVNLERGQLGLVRA.

FAD contacts are provided by Gly-17, Ala-20, and Glu-50. Positions 328 and 329 each coordinate chloride. Residue Val-330 participates in FAD binding.

Belongs to the flavin-dependent halogenase family.

It catalyses the reaction melleolide F + FADH2 + chloride + O2 = 6'-chloromelleolide F + FAD + 2 H2O + H(+). Its function is as follows. Flavin-dependent halogenase involved in the biosynthesis of melleolides, a range of antifungal and phytotoxic polyketide derivatives composed of an orsellinic acid (OA) moiety esterified to various sesquiterpene alcohols. The halogenase catalyzes the transfer of a single chlorine atom to the melleolide backbone, resulting in a 6'-chloromelleolide product. The enzyme acts on free substrate and does not depend on carrier-protein-dependent acceptor molecules. This chain is Flavin-dependent halogenase armH5, found in Armillaria mellea (Honey mushroom).